A 130-amino-acid chain; its full sequence is Holo-[acyl-carrier-protein] synthase (130 aa).

2 residues coordinate Mg(2+): Asp-8 and Glu-62.

Belongs to the P-Pant transferase superfamily. AcpS family. Requires Mg(2+) as cofactor.

The protein resides in the cytoplasm. The catalysed reaction is apo-[ACP] + CoA = holo-[ACP] + adenosine 3',5'-bisphosphate + H(+). Its function is as follows. Transfers the 4'-phosphopantetheine moiety from coenzyme A to a Ser of acyl-carrier-protein. In Herminiimonas arsenicoxydans, this protein is Holo-[acyl-carrier-protein] synthase.